A 505-amino-acid polypeptide reads, in one-letter code: ATP synthase subunit beta, mitochondrial (505 aa).

184 to 191 contacts ATP; the sequence is GGAGVGKT.

It belongs to the ATPase alpha/beta chains family. As to quaternary structure, F-type ATPases have 2 components, CF(1) - the catalytic core - and CF(0) - the membrane proton channel. CF(1) has five subunits: alpha(3), beta(3), gamma(1), delta(1), epsilon(1). CF(0) has three main subunits: a, b and c.

The protein resides in the mitochondrion. Its subcellular location is the mitochondrion inner membrane. It carries out the reaction ATP + H2O + 4 H(+)(in) = ADP + phosphate + 5 H(+)(out). Its function is as follows. Mitochondrial membrane ATP synthase (F(1)F(0) ATP synthase or Complex V) produces ATP from ADP in the presence of a proton gradient across the membrane which is generated by electron transport complexes of the respiratory chain. F-type ATPases consist of two structural domains, F(1) - containing the extramembraneous catalytic core, and F(0) - containing the membrane proton channel, linked together by a central stalk and a peripheral stalk. During catalysis, ATP synthesis in the catalytic domain of F(1) is coupled via a rotary mechanism of the central stalk subunits to proton translocation. Subunits alpha and beta form the catalytic core in F(1). Rotation of the central stalk against the surrounding alpha(3)beta(3) subunits leads to hydrolysis of ATP in three separate catalytic sites on the beta subunits. This Kluyveromyces lactis (strain ATCC 8585 / CBS 2359 / DSM 70799 / NBRC 1267 / NRRL Y-1140 / WM37) (Yeast) protein is ATP synthase subunit beta, mitochondrial (ATP2).